We begin with the raw amino-acid sequence, 251 residues long: Probable transcriptional regulatory protein BLA_1344 (251 aa).

It belongs to the TACO1 family.

It localises to the cytoplasm. The sequence is that of Probable transcriptional regulatory protein BLA_1344 from Bifidobacterium animalis subsp. lactis (strain AD011).